Here is a 179-residue protein sequence, read N- to C-terminus: Putative manganese efflux pump MntP (179 aa).

6 helical membrane passes run valine 4 to isoleucine 24, leucine 39 to leucine 59, isoleucine 69 to glutamate 89, isoleucine 102 to histidine 122, isoleucine 128 to tyrosine 148, and serine 159 to phenylalanine 179.

This sequence belongs to the MntP (TC 9.B.29) family.

It is found in the cell inner membrane. Functionally, probably functions as a manganese efflux pump. This Aliarcobacter butzleri (strain RM4018) (Arcobacter butzleri) protein is Putative manganese efflux pump MntP.